The primary structure comprises 447 residues: Adenylosuccinate synthetase (447 aa).

Residues 12 to 18 (GDEGKGK) and 40 to 42 (GHT) each bind GTP. Asp13 (proton acceptor) is an active-site residue. Mg(2+)-binding residues include Asp13 and Gly40. Residues 13-16 (DEGK), 38-41 (NAGH), Thr128, Arg142, Gln223, Thr238, and Arg302 contribute to the IMP site. Catalysis depends on His41, which acts as the Proton donor. 298 to 304 (TTTGRKR) provides a ligand contact to substrate. GTP contacts are provided by residues Arg304, 330-332 (KLD), and 412-414 (SLG).

The protein belongs to the adenylosuccinate synthetase family. In terms of assembly, homodimer. Mg(2+) is required as a cofactor.

The protein resides in the cytoplasm. It carries out the reaction IMP + L-aspartate + GTP = N(6)-(1,2-dicarboxyethyl)-AMP + GDP + phosphate + 2 H(+). It participates in purine metabolism; AMP biosynthesis via de novo pathway; AMP from IMP: step 1/2. Plays an important role in the de novo pathway of purine nucleotide biosynthesis. Catalyzes the first committed step in the biosynthesis of AMP from IMP. This is Adenylosuccinate synthetase from Nostoc sp. (strain PCC 7120 / SAG 25.82 / UTEX 2576).